The chain runs to 186 residues: Elongation factor P (186 aa).

The protein belongs to the elongation factor P family.

Its subcellular location is the cytoplasm. It participates in protein biosynthesis; polypeptide chain elongation. Its function is as follows. Involved in peptide bond synthesis. Stimulates efficient translation and peptide-bond synthesis on native or reconstituted 70S ribosomes in vitro. Probably functions indirectly by altering the affinity of the ribosome for aminoacyl-tRNA, thus increasing their reactivity as acceptors for peptidyl transferase. This is Elongation factor P from Polynucleobacter asymbioticus (strain DSM 18221 / CIP 109841 / QLW-P1DMWA-1) (Polynucleobacter necessarius subsp. asymbioticus).